Consider the following 156-residue polypeptide: Small ribosomal subunit protein uS7 (156 aa).

Belongs to the universal ribosomal protein uS7 family. Part of the 30S ribosomal subunit. Contacts proteins S9 and S11.

Functionally, one of the primary rRNA binding proteins, it binds directly to 16S rRNA where it nucleates assembly of the head domain of the 30S subunit. Is located at the subunit interface close to the decoding center, probably blocks exit of the E-site tRNA. This chain is Small ribosomal subunit protein uS7, found in Staphylococcus aureus (strain USA300).